A 37-amino-acid chain; its full sequence is uncharacterized protein (37 aa).

The helical transmembrane segment at T17–C37 threads the bilayer.

The protein belongs to the SscA family.

Its subcellular location is the membrane. This is an uncharacterized protein from Bacillus subtilis (strain 168).